The following is a 132-amino-acid chain: Urease subunit beta (132 aa).

The protein belongs to the urease beta subunit family. As to quaternary structure, heterotrimer of UreA (gamma), UreB (beta) and UreC (alpha) subunits. Three heterotrimers associate to form the active enzyme.

Its subcellular location is the cytoplasm. The catalysed reaction is urea + 2 H2O + H(+) = hydrogencarbonate + 2 NH4(+). Its pathway is nitrogen metabolism; urea degradation; CO(2) and NH(3) from urea (urease route): step 1/1. The protein is Urease subunit beta of Natronomonas pharaonis (strain ATCC 35678 / DSM 2160 / CIP 103997 / JCM 8858 / NBRC 14720 / NCIMB 2260 / Gabara) (Halobacterium pharaonis).